Consider the following 566-residue polypeptide: Bifunctional NADP phosphatase/NAD kinase (566 aa).

The tract at residues 1 to 283 is NADP phosphatase; that stretch reads MDMLEMALNI…KLVGIFGNRW (283 aa). The Mg(2+) site is built by Glu-66, Asp-85, Val-87, Asp-88, and Asp-229. An NAD kinase region spans residues 275–566; that stretch reads LVGIFGNRWR…YNKLKKLSLM (292 aa). The active-site Proton acceptor is the Asp-355. Residues 355 to 356, Arg-360, 430 to 431, Lys-441, Arg-458, Asp-460, 471 to 476, and Asn-528 each bind NAD(+); these read DG, NE, and TAYSLS.

The protein in the N-terminal section; belongs to the inositol monophosphatase superfamily. In the C-terminal section; belongs to the NAD kinase family. Homotetramer. It depends on Mg(2+) as a cofactor.

It is found in the cytoplasm. It carries out the reaction NAD(+) + ATP = ADP + NADP(+) + H(+). The catalysed reaction is NADP(+) + H2O = phosphate + NAD(+). Its function is as follows. Involved in the regulation of the intracellular balance between NAD(H) and NADP(H), and is a key enzyme in the biosynthesis of NADP. Catalyzes the phosphorylation and dephosphorylation of NAD and NADP, respectively. Although it shows conflicting dual activities and is able to supply NADP, it seems that its physiological role is to prevent excess accumulation of NADP. The chain is Bifunctional NADP phosphatase/NAD kinase from Methanococcus maripaludis (strain DSM 14266 / JCM 13030 / NBRC 101832 / S2 / LL).